The primary structure comprises 405 residues: S-adenosylmethionine synthase (405 aa).

H22 lines the ATP pocket. Residue D24 coordinates Mg(2+). Residue E50 participates in K(+) binding. Residues E63 and Q107 each contribute to the L-methionine site. Residues 107–117 (QSPDIAQGVNR) form a flexible loop region. Residues 184–186 (DGK), 250–251 (RF), D259, 265–266 (RK), A282, and K286 each bind ATP. D259 contributes to the L-methionine binding site. L-methionine is bound at residue K290.

It belongs to the AdoMet synthase family. Homotetramer; dimer of dimers. It depends on Mg(2+) as a cofactor. The cofactor is K(+).

The protein resides in the cytoplasm. It carries out the reaction L-methionine + ATP + H2O = S-adenosyl-L-methionine + phosphate + diphosphate. The protein operates within amino-acid biosynthesis; S-adenosyl-L-methionine biosynthesis; S-adenosyl-L-methionine from L-methionine: step 1/1. Catalyzes the formation of S-adenosylmethionine (AdoMet) from methionine and ATP. The overall synthetic reaction is composed of two sequential steps, AdoMet formation and the subsequent tripolyphosphate hydrolysis which occurs prior to release of AdoMet from the enzyme. The sequence is that of S-adenosylmethionine synthase from Roseiflexus castenholzii (strain DSM 13941 / HLO8).